Consider the following 300-residue polypeptide: Fructose-bisphosphate aldolase class 1 (300 aa).

E181 serves as the catalytic Proton acceptor. K218 acts as the Schiff-base intermediate with dihydroxyacetone-P in catalysis.

Belongs to the class I fructose-bisphosphate aldolase family.

It carries out the reaction beta-D-fructose 1,6-bisphosphate = D-glyceraldehyde 3-phosphate + dihydroxyacetone phosphate. Its pathway is carbohydrate degradation; glycolysis; D-glyceraldehyde 3-phosphate and glycerone phosphate from D-glucose: step 4/4. The chain is Fructose-bisphosphate aldolase class 1 (fda) from Synechocystis sp. (strain ATCC 27184 / PCC 6803 / Kazusa).